Consider the following 1663-residue polypeptide: Kotanin synthase (1663 aa).

The tract at residues 19–168 is N-terminal acylcarrier protein transacylase domain (SAT); sequence RPHEFSFNTQ…PLPVYGGPCH (150 aa). Residues 301–731 enclose the Ketosynthase family 3 (KS3) domain; sequence DSRIAVVGMS…GGNTSLLLEE (431 aa). Active-site for beta-ketoacyl synthase activity residues include Cys-474, His-609, and His-650. The interval 830-1149 is malonyl-CoA:ACP transacylase (MAT) domain; it reads FIFSGQGSFY…SMCTLQETGV (320 aa). Positions 1209-1527 are product template (PT) domain; the sequence is TALVHQIMEE…PRILMNRFFD (319 aa). Positions 1213–1349 are N-terminal hotdog fold; that stretch reads HQIMEESFRP…GVVRCGDRQS (137 aa). The region spanning 1213–1523 is the PKS/mFAS DH domain; that stretch reads HQIMEESFRP…LRPLPRILMN (311 aa). His-1245 acts as the Proton acceptor; for dehydratase activity in catalysis. Positions 1376 to 1523 are C-terminal hotdog fold; sequence QASRVSRDLV…LRPLPRILMN (148 aa). Catalysis depends on Asp-1434, which acts as the Proton donor; for dehydratase activity. A disordered region spans residues 1544-1580; that stretch reads DLPQVQHQPSPTTDSGPDDDPKDPNTGPLTPEVDLPV. Residues 1586–1663 enclose the Carrier domain; the sequence is KANTKLVRGA…ELKEYLTASW (78 aa). An O-(pantetheine 4'-phosphoryl)serine modification is found at Ser-1623.

The cofactor is pantetheine 4'-phosphate.

The protein operates within secondary metabolite biosynthesis. Non-reducing polyketide synthase; part of the gene cluster that mediates the biosynthesis of the bicoumarin kotanin. The non-reducing polyketide synthase ktnS first catalyzes the formation of the pentaketidic 4,7-dihydroxy-5-methylcoumarin from acetyl coenzyme A and 4 malonyl coenzyme A molecules. Further O-methylation by ktnB leads to the formation of 7-demethylsiderin. Then, an oxidative phenol coupling catalyzed by the cytochrome P450 monooxygenase ktnC forms the 8,8'-dimer P-orlandin via dimerization the monomeric precursor, 7-demethylsiderin. P-orlandin is subsequently O-methylated in a stepwise fashion to demethylkotanin and kotanin. This is Kotanin synthase from Aspergillus niger (strain ATCC MYA-4892 / CBS 513.88 / FGSC A1513).